A 193-amino-acid polypeptide reads, in one-letter code: Putative RING finger protein ORF38 (193 aa).

An RING-type zinc finger spans residues 12-50 (CCICLDDEDVDRDNTIPCRHTVCRTCYVKPMLDQCPVCR).

This is Putative RING finger protein ORF38 from Magallana gigas (Pacific oyster).